We begin with the raw amino-acid sequence, 214 residues long: C-type lectin domain family 2 member L (214 aa).

Residues 1–56 (MEPAREPPSRARPPPPLAARPAPAPAAPRPRSPAEAEARGPEGLLRRSGSGYEGST) form a disordered region. The segment covering 10–31 (RARPPPPLAARPAPAPAAPRPR) has biased composition (pro residues). Serine 32 carries the phosphoserine modification. A helical membrane pass occupies residues 69–89 (LLLGAIAVLLFAILVVMSILA). Positions 107 to 209 (YGRKCYFFSE…CLMTRPWVCS (103 aa)) constitute a C-type lectin domain. 2 disulfide bridges follow: cysteine 128-cysteine 208 and cysteine 187-cysteine 200.

Its subcellular location is the membrane. This is C-type lectin domain family 2 member L (CLEC2L) from Homo sapiens (Human).